Reading from the N-terminus, the 162-residue chain is MATAEIEEIPALLKPGQTVAGLDLGTKTIGLAVSDLGLSFAHPRPVIKRVKFTIDAQVLLKALETDKVGVIVIGLPMNMDGTAGPRVQATRAFVRTMQPLTDLPFVFWDERLSTVAAERALIGMDVSRGKRADRIDSAAAAFILQGALDRLHMMRRNDYDAG.

It belongs to the YqgF nuclease family.

It localises to the cytoplasm. Functionally, could be a nuclease involved in processing of the 5'-end of pre-16S rRNA. The sequence is that of Putative pre-16S rRNA nuclease from Brucella melitensis biotype 2 (strain ATCC 23457).